The following is a 545-amino-acid chain: CTP synthase (545 aa).

The segment at 1–266 is amidoligase domain; sequence MTTKYIFVTG…DQLVVDRFGL (266 aa). Residue Ser14 participates in CTP binding. Ser14 provides a ligand contact to UTP. Residues 15–20 and Asp72 each bind ATP; that span reads SLGKGI. Residues Asp72 and Glu140 each coordinate Mg(2+). CTP-binding positions include 147-149, 187-192, and Lys223; these read DIE and KTKPTQ. Residues 187–192 and Lys223 contribute to the UTP site; that span reads KTKPTQ. 239 to 241 serves as a coordination point for ATP; sequence KDV. The 252-residue stretch at 291-542 folds into the Glutamine amidotransferase type-1 domain; it reads TIGMVGKYVS…IQAAGEYMKR (252 aa). Gly352 provides a ligand contact to L-glutamine. The active-site Nucleophile; for glutamine hydrolysis is Cys379. L-glutamine contacts are provided by residues 380 to 383, Glu403, and Arg470; that span reads LGMQ. Active-site residues include His515 and Glu517.

Belongs to the CTP synthase family. Homotetramer.

The catalysed reaction is UTP + L-glutamine + ATP + H2O = CTP + L-glutamate + ADP + phosphate + 2 H(+). It catalyses the reaction L-glutamine + H2O = L-glutamate + NH4(+). It carries out the reaction UTP + NH4(+) + ATP = CTP + ADP + phosphate + 2 H(+). The protein operates within pyrimidine metabolism; CTP biosynthesis via de novo pathway; CTP from UDP: step 2/2. Allosterically activated by GTP, when glutamine is the substrate; GTP has no effect on the reaction when ammonia is the substrate. The allosteric effector GTP functions by stabilizing the protein conformation that binds the tetrahedral intermediate(s) formed during glutamine hydrolysis. Inhibited by the product CTP, via allosteric rather than competitive inhibition. Functionally, catalyzes the ATP-dependent amination of UTP to CTP with either L-glutamine or ammonia as the source of nitrogen. Regulates intracellular CTP levels through interactions with the four ribonucleotide triphosphates. This Tolumonas auensis (strain DSM 9187 / NBRC 110442 / TA 4) protein is CTP synthase.